We begin with the raw amino-acid sequence, 686 residues long: X-linked interleukin-1 receptor accessory protein-like 2 (686 aa).

Positions 1 to 16 are cleaved as a signal peptide; that stretch reads MKLPLLLALVVCSAVS. The Extracellular segment spans residues 17–354; that stretch reads TNLKMVSKRN…LLRKKDLIYK (338 aa). The Ig-like C2-type 1 domain maps to 32 to 132; the sequence is IDWSVDLKTY…YCMKVSMSLT (101 aa). The cysteines at positions 53 and 116 are disulfide-linked. 5 N-linked (GlcNAc...) asparagine glycosylation sites follow: N63, N120, N136, N211, and N328. Ig-like C2-type domains lie at 141 to 232 and 239 to 347; these read CYNS…LKVT and PPKP…VLLR. Intrachain disulfides connect C162-C214 and C265-C331. The helical transmembrane segment at 355–375 threads the bilayer; the sequence is IELAGGLGAIFLLLILLLVVY. Residues 376-686 are Cytoplasmic-facing; it reads KCYNIELMLF…KELSFTSDIW (311 aa). The TIR domain maps to 400 to 556; it reads KEYDAYLSYT…KFWKHLVYEM (157 aa). Residue E488 is part of the active site.

It belongs to the interleukin-1 receptor family. Detected in fetal brain after day 12.5, in particular in parts of the diencephalon and in the basal plate of the spinal cord. In postnatal brain detected in cerebral cortex, olfactory bulb, in the CA1 region of the hippocampus and in Purkinje cells of the Xth cerebellar lobule.

The protein resides in the membrane. The enzyme catalyses NAD(+) + H2O = ADP-D-ribose + nicotinamide + H(+). The sequence is that of X-linked interleukin-1 receptor accessory protein-like 2 (Il1rapl2) from Mus musculus (Mouse).